The sequence spans 557 residues: NADP-dependent malic enzyme (557 aa).

Tyrosine 88 (proton donor) is an active-site residue. Arginine 141 serves as a coordination point for NADP(+). Lysine 159 serves as the catalytic Proton acceptor. The a divalent metal cation site is built by glutamate 231, aspartate 232, and aspartate 255. Aspartate 255 is an NADP(+) binding site. Serine 322 is modified (phosphoserine). Asparagine 394 contacts NADP(+).

The protein belongs to the malic enzymes family. Homotetramer. Mg(2+) is required as a cofactor. Mn(2+) serves as cofactor.

Its subcellular location is the cytoplasm. The catalysed reaction is (S)-malate + NADP(+) = pyruvate + CO2 + NADPH. It carries out the reaction oxaloacetate + H(+) = pyruvate + CO2. Functionally, catalyzes the oxidative decarboxylation of (S)-malate in the presence of NADP(+) and divalent metal ions, and decarboxylation of oxaloacetate. This Sus scrofa (Pig) protein is NADP-dependent malic enzyme (ME1).